A 299-amino-acid chain; its full sequence is ATP phosphoribosyltransferase (299 aa).

It belongs to the ATP phosphoribosyltransferase family. Long subfamily. As to quaternary structure, equilibrium between an active dimeric form, an inactive hexameric form and higher aggregates. Interconversion between the various forms is largely reversible and is influenced by the natural substrates and inhibitors of the enzyme. Mg(2+) serves as cofactor.

Its subcellular location is the cytoplasm. The enzyme catalyses 1-(5-phospho-beta-D-ribosyl)-ATP + diphosphate = 5-phospho-alpha-D-ribose 1-diphosphate + ATP. It functions in the pathway amino-acid biosynthesis; L-histidine biosynthesis; L-histidine from 5-phospho-alpha-D-ribose 1-diphosphate: step 1/9. With respect to regulation, feedback inhibited by histidine. Functionally, catalyzes the condensation of ATP and 5-phosphoribose 1-diphosphate to form N'-(5'-phosphoribosyl)-ATP (PR-ATP). Has a crucial role in the pathway because the rate of histidine biosynthesis seems to be controlled primarily by regulation of HisG enzymatic activity. The chain is ATP phosphoribosyltransferase from Shigella flexneri serotype 5b (strain 8401).